A 309-amino-acid chain; its full sequence is tRNA pseudouridine synthase B (309 aa).

Asp-39 functions as the Nucleophile in the catalytic mechanism. The PUA domain occupies 229–306 (LPRVVVHQES…ERVLTLRKVF (78 aa)).

This sequence belongs to the pseudouridine synthase TruB family. Type 1 subfamily.

It carries out the reaction uridine(55) in tRNA = pseudouridine(55) in tRNA. Responsible for synthesis of pseudouridine from uracil-55 in the psi GC loop of transfer RNAs. The sequence is that of tRNA pseudouridine synthase B from Thermotoga petrophila (strain ATCC BAA-488 / DSM 13995 / JCM 10881 / RKU-1).